A 213-amino-acid polypeptide reads, in one-letter code: ATP-dependent Clp protease proteolytic subunit 3 (213 aa).

Ser107 (nucleophile) is an active-site residue. His132 is an active-site residue.

The protein belongs to the peptidase S14 family. In terms of assembly, fourteen ClpP subunits assemble into 2 heptameric rings which stack back to back to give a disk-like structure with a central cavity, resembling the structure of eukaryotic proteasomes.

The protein resides in the cytoplasm. It carries out the reaction Hydrolysis of proteins to small peptides in the presence of ATP and magnesium. alpha-casein is the usual test substrate. In the absence of ATP, only oligopeptides shorter than five residues are hydrolyzed (such as succinyl-Leu-Tyr-|-NHMec, and Leu-Tyr-Leu-|-Tyr-Trp, in which cleavage of the -Tyr-|-Leu- and -Tyr-|-Trp bonds also occurs).. Functionally, cleaves peptides in various proteins in a process that requires ATP hydrolysis. Has a chymotrypsin-like activity. Plays a major role in the degradation of misfolded proteins. This Frankia casuarinae (strain DSM 45818 / CECT 9043 / HFP020203 / CcI3) protein is ATP-dependent Clp protease proteolytic subunit 3.